The chain runs to 843 residues: Protein P (843 aa).

Residues 1-177 (MPLSYQHFRK…FCGSPYSWEQ (177 aa)) form a terminal protein domain (TP) region. Positions 178 to 346 (ELQHGRLVFQ…YCLTHIVNLL (169 aa)) are spacer. The interval 347–690 (EDWGPCTEHG…YLHLYPVARQ (344 aa)) is polymerase/reverse transcriptase domain (RT). The 244-residue stretch at 357 to 600 (EHNIRIPRTP…YSLNFMGYVI (244 aa)) folds into the Reverse transcriptase domain. The Mg(2+) site is built by Asp-429, Asp-551, and Asp-552.

Belongs to the hepadnaviridae P protein family.

It catalyses the reaction DNA(n) + a 2'-deoxyribonucleoside 5'-triphosphate = DNA(n+1) + diphosphate. It carries out the reaction Endonucleolytic cleavage to 5'-phosphomonoester.. Activated by host HSP70 and HSP40 in vitro to be able to bind the epsilon loop of the pgRNA. Because deletion of the RNase H region renders the protein partly chaperone-independent, the chaperones may be needed indirectly to relieve occlusion of the RNA-binding site by this domain. Inhibited by several reverse-transcriptase inhibitors: Lamivudine, Adefovir and Entecavir. Multifunctional enzyme that converts the viral RNA genome into dsDNA in viral cytoplasmic capsids. This enzyme displays a DNA polymerase activity that can copy either DNA or RNA templates, and a ribonuclease H (RNase H) activity that cleaves the RNA strand of RNA-DNA heteroduplexes in a partially processive 3'- to 5'-endonucleasic mode. Neo-synthesized pregenomic RNA (pgRNA) are encapsidated together with the P protein, and reverse-transcribed inside the nucleocapsid. Initiation of reverse-transcription occurs first by binding the epsilon loop on the pgRNA genome, and is initiated by protein priming, thereby the 5'-end of (-)DNA is covalently linked to P protein. Partial (+)DNA is synthesized from the (-)DNA template and generates the relaxed circular DNA (RC-DNA) genome. After budding and infection, the RC-DNA migrates in the nucleus, and is converted into a plasmid-like covalently closed circular DNA (cccDNA). The activity of P protein does not seem to be necessary for cccDNA generation, and is presumably released from (+)DNA by host nuclear DNA repair machinery. The protein is Protein P of Hepatitis B virus genotype C subtype adr (isolate Japan/Nishioka/1983) (HBV-C).